The chain runs to 792 residues: Probable phosphoketolase (792 aa).

The protein belongs to the XFP family. Requires thiamine diphosphate as cofactor.

The protein is Probable phosphoketolase of Brucella melitensis biotype 1 (strain ATCC 23456 / CCUG 17765 / NCTC 10094 / 16M).